Here is a 2138-residue protein sequence, read N- to C-terminus: DNA polymerase epsilon catalytic subunit B (2138 aa).

Residues 1224-1231 carry the Nuclear localization signal 1 motif; that stretch reads EKRKWKMT. Zn(2+) contacts are provided by Cys2015, Cys2018, Cys2040, and Cys2045. The CysA-type zinc finger occupies 2015-2045; sequence CSNCGAYRDLDFCRDSALLTEKEWSCADPQC. Cys2076, Cys2079, Cys2091, and Cys2093 together coordinate [4Fe-4S] cluster. A CysB motif motif is present at residues 2076 to 2093; the sequence is CNRCNQVKAAHLTEQCEC. Residues 2107–2114 carry the Nuclear localization signal 2 motif; sequence HKRIEIFL.

It belongs to the DNA polymerase type-B family. In terms of assembly, heterotetramer. It depends on [4Fe-4S] cluster as a cofactor. Mostly expressed at low levels in inflorescence (floral meristem and flowers until anthesis), and, to a lower extent, in seeds.

Its subcellular location is the nucleus. It catalyses the reaction DNA(n) + a 2'-deoxyribonucleoside 5'-triphosphate = DNA(n+1) + diphosphate. Functionally, DNA polymerase II, which participates in chromosomal DNA replication. Involved in the determination of cell fate during plant embryogenesis. Contributes to the flowering time repression. This is DNA polymerase epsilon catalytic subunit B (POL2B) from Arabidopsis thaliana (Mouse-ear cress).